A 164-amino-acid polypeptide reads, in one-letter code: MVATSKPKSEPKIAVKAQYVKDLSFENPDPINSLFKITEKPKIDTKLDINITKLSEDNHFEVELSTNVSATCNDKKIFHIEVVYAGIFQLTNISEEDKKFILSVRCPEIIFPYVRQIISESTQKGGFLPLMIDYIDFAEIISNTQTTNNQQELIKPEFDVSNKQ.

The protein belongs to the SecB family. In terms of assembly, homotetramer, a dimer of dimers. One homotetramer interacts with 1 SecA dimer.

The protein localises to the cytoplasm. One of the proteins required for the normal export of preproteins out of the cell cytoplasm. It is a molecular chaperone that binds to a subset of precursor proteins, maintaining them in a translocation-competent state. It also specifically binds to its receptor SecA. The sequence is that of Protein-export protein SecB from Orientia tsutsugamushi (strain Ikeda) (Rickettsia tsutsugamushi).